The chain runs to 284 residues: Tropomyosin alpha-1 chain (284 aa).

The disordered stretch occupies residues M1–K37. Residues M1–I284 adopt a coiled-coil conformation. The segment covering K12–K37 has biased composition (basic and acidic residues).

This sequence belongs to the tropomyosin family. In terms of assembly, homodimer. Heterodimer of an alpha (TPM1, TPM3 or TPM4) and a beta (TPM2) chain.

The protein localises to the cytoplasm. Its subcellular location is the cytoskeleton. Its function is as follows. Binds to actin filaments in muscle and non-muscle cells. Plays a central role, in association with the troponin complex, in the calcium dependent regulation of vertebrate striated muscle contraction. Smooth muscle contraction is regulated by interaction with caldesmon. In non-muscle cells is implicated in stabilizing cytoskeleton actin filaments. In Danio rerio (Zebrafish), this protein is Tropomyosin alpha-1 chain (tpma).